The following is a 337-amino-acid chain: Transcription initiation factor IIB (337 aa).

Residues 37-68 (EKAVCPECGSRNLVHDYERAELVCGDCGLVID) form a TFIIB-type zinc finger. The Zn(2+) site is built by cysteine 41, cysteine 44, cysteine 60, and cysteine 63. 2 consecutive repeat copies span residues 154–237 (SELD…SREL) and 248–329 (DYVP…ELAE).

The protein belongs to the TFIIB family.

In terms of biological role, stabilizes TBP binding to an archaeal box-A promoter. Also responsible for recruiting RNA polymerase II to the pre-initiation complex (DNA-TBP-TFIIB). This is Transcription initiation factor IIB from Methanosarcina mazei (Methanosarcina frisia).